Consider the following 680-residue polypeptide: Viral IRF2-like protein (680 aa).

The IRF tryptophan pentad repeat DNA-binding region spans 7 to 103 (SEWLTDFIID…RPFTIYKGKM (97 aa)). Disordered stretches follow at residues 156 to 201 (SLRK…SENE), 220 to 257 (EEPEPSGFGSSGQSSSLLAPDSPRPSTSQVQGPLHVHT), 343 to 365 (ETASPQGPMQSEGGEEGSTESVS), and 403 to 423 (ASPQGPMQSEGGEEGSTESVS). Residues 168 to 188 (KQAAAVATPTTSSAAEVSSRS) show a composition bias toward low complexity. A compositionally biased stretch (acidic residues) spans 191–200 (EDTESSDSEN). Residues 220 to 240 (EEPEPSGFGSSGQSSSLLAPD) show a composition bias toward low complexity.

Belongs to the IRF family. Interacts with host EIF2AK2/PKR. Interacts with host USP7.

The protein resides in the host nucleus. Its subcellular location is the host cytoplasm. DNA-binding transcription factor that plays a role in the modulation of host immune response. Acts by interacting with host EIF2AK2/PKR and inhibiting its activation. In turn, EIF2AK2/PKR substrates including EIF2S1 or histone H2A are not phosphorylated. Inhibits type I interferon signaling by targeting host IRF3 during viral reactivation from latency. Attenuates the transcriptional activity of host FOXO3 via activation of the AKT1 signaling pathway, inhibiting FOXO3-mediated apoptosis. Also suppresses the expression of viral early lytic genes in both newly infected and reactivated infected host cells allowing regulation of viral life cycle by harnessing the interferon pathway. Mechanistically, promotes host PML bodies formation as well as host antiviral restriction factors IFIT1-3 expression leading to inhibition of viral early lytic proteins. Also regulates host TRAF3 and TRAF6 ubiquitination by interacting with USP7 deubiquitinase thereby influencing TRAF3/6-mediated signal transduction. This is Viral IRF2-like protein (vIRF-2) from Human herpesvirus 8 type P (isolate GK18) (HHV-8).